A 149-amino-acid polypeptide reads, in one-letter code: Large ribosomal subunit protein uL15 (149 aa).

The segment at 1 to 52 is disordered; the sequence is MSELLKLHHLRPAPGSNKAKIRKGRGEASKGKTAGRGTKGTKARSTVPAGFE.

The protein belongs to the universal ribosomal protein uL15 family. In terms of assembly, part of the 50S ribosomal subunit.

Functionally, binds to the 23S rRNA. The sequence is that of Large ribosomal subunit protein uL15 from Thermobifida fusca (strain YX).